A 72-amino-acid polypeptide reads, in one-letter code: Mitochondrial import receptor subunit TOM7-1 (72 aa).

Residues 2 to 41 (LKPKGKNTKKAAAADEDDGAVAVVGKFVKEWGTWTAKKAK) lie on the Cytoplasmic side of the membrane. A helical membrane pass occupies residues 42 to 59 (VITHYGFIPLVIIIGMNS). Residues 60 to 72 (EPKPSLSQLLSPV) lie on the Mitochondrial intermembrane side of the membrane.

It belongs to the Tom7 family. Forms part of the preprotein translocase complex of the outer mitochondrial membrane (TOM complex).

Its subcellular location is the mitochondrion outer membrane. In terms of biological role, seems to act as a modulator of the dynamics of the mitochondrial protein transport machinery. Seems to promote the dissociation of subunits of the outer membrane translocase. This chain is Mitochondrial import receptor subunit TOM7-1 (TOM7-1), found in Solanum tuberosum (Potato).